Here is a 62-residue protein sequence, read N- to C-terminus: Conotoxin TxIC (62 aa).

Positions 1-22 (MHCLPIFVILLLLTASGPSVDA) are cleaved as a signal peptide. A propeptide spanning residues 23–47 (QLKTKDDVPLSSFRDHAKSTLRRLQ) is cleaved from the precursor. Disulfide bonds link cysteine 52/cysteine 58 and cysteine 53/cysteine 61. A 4-hydroxyproline modification is found at proline 60. Cysteine amide is present on cysteine 61.

The protein belongs to the conotoxin A superfamily. As to expression, expressed by the venom duct.

It localises to the secreted. The polypeptide is Conotoxin TxIC (Conus textile (Cloth-of-gold cone)).